The sequence spans 529 residues: hal-like protein DDB_G0273787/DDB_G0273081 (529 aa).

The segment at residues 151-153 (ASG) is a cross-link (5-imidazolinone (Ala-Gly)). Ser152 bears the 2,3-didehydroalanine (Ser) mark.

The protein belongs to the PAL/histidase family. Contains an active site 4-methylidene-imidazol-5-one (MIO), which is formed autocatalytically by cyclization and dehydration of residues Ala-Ser-Gly.

The protein localises to the cytoplasm. The enzyme catalyses L-histidine = trans-urocanate + NH4(+). It functions in the pathway amino-acid degradation; L-histidine degradation into L-glutamate; N-formimidoyl-L-glutamate from L-histidine: step 1/3. This Dictyostelium discoideum (Social amoeba) protein is hal-like protein DDB_G0273787/DDB_G0273081.